A 201-amino-acid chain; its full sequence is Recombination protein RecR (201 aa).

The C4-type zinc finger occupies Cys56 to Cys71. The Toprim domain maps to Ser79–Pro174.

This sequence belongs to the RecR family.

Its function is as follows. May play a role in DNA repair. It seems to be involved in an RecBC-independent recombinational process of DNA repair. It may act with RecF and RecO. The protein is Recombination protein RecR of Cutibacterium acnes (strain DSM 16379 / KPA171202) (Propionibacterium acnes).